Here is a 930-residue protein sequence, read N- to C-terminus: MEYERRGGRGDRTGRYGATDRSQDDSGENRSRDHDYRDMDYRSYPREYGSQEGKHEYDDSSEEQSAEDSYEASPGSETQRRRRRRHRHSPTGPPGFPRDGDYRDQDYRTEQGEEEEEEDEEEEEEKASNIVMLRMLPQAATEDDIRGQLQSHGVQAREVRLMRNKSSGQSRGFAFVEFSHLQDATRWMEANQHSLNILGQKVSMHYSDPKPKINEDWLCNKCGVQNFKRREKCFKCGVPKSEAEQKLPLGTRLDQQALPLGGRELSQGLLPLPQPYQAQGVLTSQALSQGSEPSSENANDTIILRNLNPHSTMDSILGALAPYAVLSSSNVRVIKDKQTQLNRGFAFIQLSTIVEAAQLLQILQALHPPLTIDGKTINVEFAKGSKRDMASNEGSRINAASVASTAIAAAQWAISQASQGGESAWAAPEEPPVDYSYYQQDEGYGSSQGTDSLYAHGYLKNSKGPGMTGTKGDPAGTGPEASLEAGADSVSLQAFSRAQPGAAPGLYQQSAEGSSGQSTATNSQSYTIISPAVLKAELQSPTQPSSSAFPPATSPTAPEAYSQYPVPDVSTYQYDETSGYYYDPQTGLYYDPNSQYYYNAQSQQYLYWDGERRTYIPALEQSADGHKDTGASSKEGKEKKEKHKTKTAQQIAKDMERWARSLNKQKENFKNSFQPISALRDDERRESATADAGYAILEKKGALAERQHTSMDLPKLASDDRPSPPRGLVAAYSGESDSEEEQERGGPEREEKLTDWQKLACLLCRRQFPSKEALIRHQQLSGLHKQNLEIHRRAHLSENELEALEKNDMEQMKYRDRAAERREKYGIPEPPEPKRRKYGGISTASVDFEQPTRDGLGSDNIGSRMLQAMGWKEGSGLGRKKQGIVTPIEAQTRVRGSGLGARGSSYGVTSTESYKETLHKTMVTRFNEAQ.

Basic and acidic residues-rich tracts occupy residues 1–14 and 21–45; these read MEYE…DRTG and RSQD…RSYP. The interval 1-127 is disordered; that stretch reads MEYERRGGRG…EDEEEEEEKA (127 aa). The segment covering 59–70 has biased composition (acidic residues); it reads DSSEEQSAEDSY. 2 positions are modified to phosphoserine: S61 and S89. Residues 80–89 show a composition bias toward basic residues; that stretch reads RRRRRRHRHS. The span at 98-111 shows a compositional bias: basic and acidic residues; the sequence is RDGDYRDQDYRTEQ. Acidic residues predominate over residues 112–125; sequence GEEEEEEDEEEEEE. In terms of domain architecture, RRM 1 spans 129–209; sequence NIVMLRMLPQ…QKVSMHYSDP (81 aa). The segment at 212–242 adopts a RanBP2-type zinc-finger fold; it reads KINEDWLCNKCGVQNFKRREKCFKCGVPKSE. The RRM 2 domain maps to 300–384; sequence DTIILRNLNP…KTINVEFAKG (85 aa). K383 bears the N6-acetyllysine mark. Disordered regions lie at residues 464-487, 503-522, 537-566, 620-646, and 712-753; these read GPGM…EAGA, APGL…TATN, ELQS…QYPV, EQSA…HKTK, and DLPK…EEKL. A compositionally biased stretch (polar residues) spans 507–522; the sequence is YQQSAEGSSGQSTATN. A compositionally biased stretch (low complexity) spans 540–562; sequence SPTQPSSSAFPPATSPTAPEAYS. Basic and acidic residues predominate over residues 623 to 639; it reads ADGHKDTGASSKEGKEK. Residues S718, S723, S733, S736, and S738 each carry the phosphoserine modification. Positions 743 to 753 are enriched in basic and acidic residues; the sequence is ERGGPEREEKL. A C2H2-type; atypical zinc finger spans residues 759 to 784; sequence LACLLCRRQFPSKEALIRHQQLSGLH. 3 positions are modified to phosphoserine: S781, S797, and S845. Positions 818 to 861 are disordered; the sequence is AAERREKYGIPEPPEPKRRKYGGISTASVDFEQPTRDGLGSDNI. Residues 858-904 enclose the G-patch domain; it reads SDNIGSRMLQAMGWKEGSGLGRKKQGIVTPIEAQTRVRGSGLGARGS. R902 carries the omega-N-methylarginine modification.

Associates with the spliceosome. Component of a large chromatin remodeling complex, at least composed of MYSM1, PCAF, RBM10 and KIF11/TRIP5.

The protein resides in the nucleus. Functionally, binds to ssRNA containing the consensus sequence 5'-AGGUAA-3'. May be involved in post-transcriptional processing, most probably in mRNA splicing. Binds to RNA homopolymers, with a preference for poly(G) and poly(U) and little for poly(A). May bind to specific miRNA hairpins. The protein is RNA-binding protein 10 of Mus musculus (Mouse).